A 423-amino-acid chain; its full sequence is Nucleoporin NUP42 (423 aa).

A C3H1-type zinc finger spans residues 1–25 (MAICQFFLQGRCRFGDRCWNEHPGA). The stretch at 14–15 (FG) is one FG 1 repeat. Residues 24–85 (GARGAGGGRQ…EKPYFSSFDS (62 aa)) are disordered. Positions 40 to 69 (SGNNRRGWNTTSQRYSNVIQPSSFSKSTPW) are enriched in polar residues. The interaction with HIV-1 Vpr stretch occupies residues 94 to 170 (GFGLSENPFA…EYHNFLTSNN (77 aa)). One copy of the FG 2 repeat lies at 95 to 96 (FG). Position 106 is a phosphoserine (Ser-106). FG repeat units lie at residues 218–219 (FG), 220–221 (FG), 265–266 (FG), 271–272 (FG), 288–289 (FG), 290–291 (FG), 311–312 (FG), 336–337 (FG), 345–346 (FG), and 364–365 (FG). The tract at residues 365-423 (GNSSISTSLSASSSIIATDNVLFTPRDKLTVEELEQFQSKKFTLGKIPLKPPPLELLNV) is interaction with GLE1.

In terms of assembly, probable component of the nuclear pore complex (NPC). Interacts with nuclear export protein NXF1. Interacts with GLE1. Able to form a heterotrimer with NUP155 and GLE1 in vitro. Interacts with XPO1. As to quaternary structure, (Microbial infection) Interacts with the HIV-1 virus proteins Rev and Vpr. The interaction with HIV-1 Rev, a protein that mediates nuclear export of unspliced viral RNAs, suggests that its function may be bypassed by the HIV-1 virus. Post-translationally, O-glycosylated. As to expression, ubiquitously expressed.

It localises to the nucleus. The protein localises to the nuclear pore complex. The protein resides in the nucleus membrane. In terms of biological role, required for the export of mRNAs containing poly(A) tails from the nucleus into the cytoplasm. Its function is as follows. (Microbial infection) In case of infection by HIV-1, it may participate in the docking of viral Vpr at the nuclear envelope. In Homo sapiens (Human), this protein is Nucleoporin NUP42.